We begin with the raw amino-acid sequence, 158 residues long: MNNKVTLLPPRVFFCLSWSVMVNIDRRKSDRSVNLDDQHSNKPPSESLISLLSLTSSMSISSLLSLLIIVAVLFPPLYISGLPWIMSFKSVFSFFSLSITSFIMVPFLLISLTILCKIELSSKCITSPSISKFNCPDIINFVNSSLISSKSIPSVDDK.

Transmembrane regions (helical) follow at residues 66–86 and 94–114; these read LLII…PWIM and FFSL…SLTI.

Its subcellular location is the membrane. This is an uncharacterized protein from Saccharomyces cerevisiae (strain ATCC 204508 / S288c) (Baker's yeast).